Reading from the N-terminus, the 153-residue chain is 3-hydroxyacyl-[acyl-carrier-protein] dehydratase FabZ (153 aa).

Histidine 54 is a catalytic residue.

It belongs to the thioester dehydratase family. FabZ subfamily.

It localises to the cytoplasm. It catalyses the reaction a (3R)-hydroxyacyl-[ACP] = a (2E)-enoyl-[ACP] + H2O. Involved in unsaturated fatty acids biosynthesis. Catalyzes the dehydration of short chain beta-hydroxyacyl-ACPs and long chain saturated and unsaturated beta-hydroxyacyl-ACPs. The protein is 3-hydroxyacyl-[acyl-carrier-protein] dehydratase FabZ of Shewanella pealeana (strain ATCC 700345 / ANG-SQ1).